We begin with the raw amino-acid sequence, 214 residues long: MMSYVRMTLYHGTDRKSAEKIMESKEILPSQGDNHWLGDGIYFYEEEFHAFKWIWYKEKNRNRLLKNFAIIKAEVICEESRIFDLTKIEHKLLFDMMYKLINTTKLRLDKLRGDMCAEGVVINYMFKNKELGYNKRFDIVRALFPIPVKKYQKIENREKNKKYKERTHRLTFMPEIQVCVKNPSVIKKLEWYDLEKTIDKFLIYTEIYKEDLGI.

This is an uncharacterized protein from Methanocaldococcus jannaschii (strain ATCC 43067 / DSM 2661 / JAL-1 / JCM 10045 / NBRC 100440) (Methanococcus jannaschii).